Consider the following 549-residue polypeptide: Glucoamylase, intracellular sporulation-specific (549 aa).

Tryptophan 198 serves as a coordination point for substrate. Residue aspartate 261 is the Proton acceptor of the active site. The Proton donor role is filled by glutamate 264.

The protein belongs to the glycosyl hydrolase 15 family.

It carries out the reaction Hydrolysis of terminal (1-&gt;4)-linked alpha-D-glucose residues successively from non-reducing ends of the chains with release of beta-D-glucose.. This chain is Glucoamylase, intracellular sporulation-specific (SGA1), found in Saccharomyces cerevisiae (strain ATCC 204508 / S288c) (Baker's yeast).